Here is a 152-residue protein sequence, read N- to C-terminus: Aspartate 1-decarboxylase (152 aa).

The Schiff-base intermediate with substrate; via pyruvic acid role is filled by Ser-24. A Pyruvic acid (Ser) modification is found at Ser-24. A substrate-binding site is contributed by Thr-56. Catalysis depends on Tyr-57, which acts as the Proton donor. 72–74 (GAA) contacts substrate.

The protein belongs to the PanD family. In terms of assembly, heterooctamer of four alpha and four beta subunits. Requires pyruvate as cofactor. Post-translationally, is synthesized initially as an inactive proenzyme, which is activated by self-cleavage at a specific serine bond to produce a beta-subunit with a hydroxyl group at its C-terminus and an alpha-subunit with a pyruvoyl group at its N-terminus.

It localises to the cytoplasm. The catalysed reaction is L-aspartate + H(+) = beta-alanine + CO2. The protein operates within cofactor biosynthesis; (R)-pantothenate biosynthesis; beta-alanine from L-aspartate: step 1/1. Catalyzes the pyruvoyl-dependent decarboxylation of aspartate to produce beta-alanine. This Rhodospirillum centenum (strain ATCC 51521 / SW) protein is Aspartate 1-decarboxylase.